The chain runs to 339 residues: Anthranilate phosphoribosyltransferase (339 aa).

Residues Gly-80, 83–84, Thr-88, 90–93, 108–116, and Ser-120 contribute to the 5-phospho-alpha-D-ribose 1-diphosphate site; these read GD, NIST, and KHGNRAVSS. Gly-80 serves as a coordination point for anthranilate. Ser-92 serves as a coordination point for Mg(2+). Asn-111 lines the anthranilate pocket. Arg-166 lines the anthranilate pocket. The Mg(2+) site is built by Asp-225 and Glu-226.

This sequence belongs to the anthranilate phosphoribosyltransferase family. As to quaternary structure, homodimer. It depends on Mg(2+) as a cofactor.

The catalysed reaction is N-(5-phospho-beta-D-ribosyl)anthranilate + diphosphate = 5-phospho-alpha-D-ribose 1-diphosphate + anthranilate. The protein operates within amino-acid biosynthesis; L-tryptophan biosynthesis; L-tryptophan from chorismate: step 2/5. Functionally, catalyzes the transfer of the phosphoribosyl group of 5-phosphorylribose-1-pyrophosphate (PRPP) to anthranilate to yield N-(5'-phosphoribosyl)-anthranilate (PRA). This is Anthranilate phosphoribosyltransferase from Caldanaerobacter subterraneus subsp. tengcongensis (strain DSM 15242 / JCM 11007 / NBRC 100824 / MB4) (Thermoanaerobacter tengcongensis).